A 150-amino-acid polypeptide reads, in one-letter code: Putative esterase SSO1253 (150 aa).

The protein belongs to the thioesterase PaaI family.

The polypeptide is Putative esterase SSO1253 (Saccharolobus solfataricus (strain ATCC 35092 / DSM 1617 / JCM 11322 / P2) (Sulfolobus solfataricus)).